A 144-amino-acid polypeptide reads, in one-letter code: MNFKYIIAVSFFIASAYARRNEKDVQSLSQRDVLEEESLREIRGIGGVLLSAGKAALKGLAKVLAEKYANGKRTAEDHEVMKRLEAVMRDLDSLDHPEEASERETRGFNQEEIANLFTKKEKRILGPVLGLVGNALGGLIKKIG.

The signal sequence occupies residues 1–18; sequence MNFKYIIAVSFFIASAYA. Positions 19–43 are excised as a propeptide; it reads RRNEKDVQSLSQRDVLEEESLREIR. Position 70 is an asparagine amide (N70). Positions 74-123 are excised as a propeptide; that stretch reads TAEDHEVMKRLEAVMRDLDSLDHPEEASERETRGFNQEEIANLFTKKEKR. Position 143 is an isoleucine amide (I143).

The protein belongs to the bombinin family. As to expression, expressed by the skin glands.

The protein localises to the secreted. Functionally, maximin-4 shows antibacterial activity against both Gram-positive and Gram-negative bacteria. It also shows antimicrobial activity against the fungus C.albicans, but not against A.flavus nor P.uticale. It has little hemolytic activity. It does not possess a significant cytotoxicity against tumor cell lines. It does not possess a significant anti-HIV activity. Maximin-H3 shows antibacterial activity against both Gram-positive and Gram-negative bacteria. It also shows antimicrobial activity against the fungus C.albicans. Shows strong hemolytic activity. The protein is Maximins 4/H3 type 2 of Bombina maxima (Giant fire-bellied toad).